We begin with the raw amino-acid sequence, 266 residues long: Probable carboxylesterase Os04g0669500 (266 aa).

Residues S154, D208, and H240 each act as charge relay system in the active site.

It belongs to the AB hydrolase superfamily. AB hydrolase 2 family.

Its function is as follows. Possesses carboxylesterase activity in vitro. This Oryza sativa subsp. japonica (Rice) protein is Probable carboxylesterase Os04g0669500.